Here is a 376-residue protein sequence, read N- to C-terminus: Thymidine kinase (376 aa).

The tract at residues 1–39 (MASYPCHQHASAFDQAARSRGHSNRRTALRPRRQQEATE) is disordered. A compositionally biased stretch (basic residues) spans 19-32 (SRGHSNRRTALRPR). An ATP-binding site is contributed by 56–63 (GPHGMGKT). E83 acts as the Proton acceptor in catalysis. Substrate is bound by residues Y101 and Q125. R216 lines the ATP pocket. R222 provides a ligand contact to substrate. Residues 260-280 (GQLSGTAVPPQGAEPQSNAGP) are disordered.

This sequence belongs to the herpesviridae thymidine kinase family. In terms of assembly, homodimer.

It carries out the reaction thymidine + ATP = dTMP + ADP + H(+). Its function is as follows. Catalyzes the transfer of the gamma-phospho group of ATP to thymidine to generate dTMP in the salvage pathway of pyrimidine synthesis. The dTMP serves as a substrate for DNA polymerase during viral DNA replication. Allows the virus to be reactivated and to grow in non-proliferative cells lacking a high concentration of phosphorylated nucleic acid precursors. In Homo sapiens (Human), this protein is Thymidine kinase.